We begin with the raw amino-acid sequence, 417 residues long: Serine hydroxymethyltransferase 2 (417 aa).

Residues Leu121 and 125–127 contribute to the (6S)-5,6,7,8-tetrahydrofolate site; that span reads GHL. Position 230 is an N6-(pyridoxal phosphate)lysine (Lys230). Position 355 to 357 (355 to 357) interacts with (6S)-5,6,7,8-tetrahydrofolate; that stretch reads SPF.

It belongs to the SHMT family. Homodimer. Requires pyridoxal 5'-phosphate as cofactor.

It localises to the cytoplasm. The enzyme catalyses (6R)-5,10-methylene-5,6,7,8-tetrahydrofolate + glycine + H2O = (6S)-5,6,7,8-tetrahydrofolate + L-serine. It participates in one-carbon metabolism; tetrahydrofolate interconversion. Its pathway is amino-acid biosynthesis; glycine biosynthesis; glycine from L-serine: step 1/1. Its function is as follows. Catalyzes the reversible interconversion of serine and glycine with tetrahydrofolate (THF) serving as the one-carbon carrier. This reaction serves as the major source of one-carbon groups required for the biosynthesis of purines, thymidylate, methionine, and other important biomolecules. Also exhibits THF-independent aldolase activity toward beta-hydroxyamino acids, producing glycine and aldehydes, via a retro-aldol mechanism. In Colwellia psychrerythraea (strain 34H / ATCC BAA-681) (Vibrio psychroerythus), this protein is Serine hydroxymethyltransferase 2.